A 277-amino-acid polypeptide reads, in one-letter code: Thymidylate synthase (277 aa).

Arg21 is a dUMP binding site. Residue His51 participates in (6R)-5,10-methylene-5,6,7,8-tetrahydrofolate binding. 126–127 (RR) contributes to the dUMP binding site. Cys159 functions as the Nucleophile in the catalytic mechanism. Residues 179-182 (RSAD), Asn190, and 220-222 (HLY) each bind dUMP. Asp182 contributes to the (6R)-5,10-methylene-5,6,7,8-tetrahydrofolate binding site. Ser276 contacts (6R)-5,10-methylene-5,6,7,8-tetrahydrofolate.

It belongs to the thymidylate synthase family. Bacterial-type ThyA subfamily. Homodimer.

Its subcellular location is the cytoplasm. It catalyses the reaction dUMP + (6R)-5,10-methylene-5,6,7,8-tetrahydrofolate = 7,8-dihydrofolate + dTMP. Its pathway is pyrimidine metabolism; dTTP biosynthesis. Catalyzes the reductive methylation of 2'-deoxyuridine-5'-monophosphate (dUMP) to 2'-deoxythymidine-5'-monophosphate (dTMP) while utilizing 5,10-methylenetetrahydrofolate (mTHF) as the methyl donor and reductant in the reaction, yielding dihydrofolate (DHF) as a by-product. This enzymatic reaction provides an intracellular de novo source of dTMP, an essential precursor for DNA biosynthesis. The sequence is that of Thymidylate synthase from Hydrogenovibrio crunogenus (strain DSM 25203 / XCL-2) (Thiomicrospira crunogena).